The chain runs to 1011 residues: Phosphoenolpyruvate carboxylase (1011 aa).

Catalysis depends on residues His-207 and Lys-658.

This sequence belongs to the PEPCase type 1 family. It depends on Mg(2+) as a cofactor.

The enzyme catalyses oxaloacetate + phosphate = phosphoenolpyruvate + hydrogencarbonate. Its function is as follows. Forms oxaloacetate, a four-carbon dicarboxylic acid source for the tricarboxylic acid cycle. This Thermosynechococcus vestitus (strain NIES-2133 / IAM M-273 / BP-1) protein is Phosphoenolpyruvate carboxylase (ppc).